Reading from the N-terminus, the 462-residue chain is GTPase Der (462 aa).

EngA-type G domains are found at residues Ile-3 to Lys-170 and Ile-201 to Ile-372. Residues Gly-9–Ser-16, Asp-57–Ile-61, Asn-122–Glu-125, Gly-207–Ser-214, Asp-254–Ile-258, and Asn-319–Asp-322 each bind GTP. The region spanning Lys-373–Lys-457 is the KH-like domain.

Belongs to the TRAFAC class TrmE-Era-EngA-EngB-Septin-like GTPase superfamily. EngA (Der) GTPase family. As to quaternary structure, associates with the 50S ribosomal subunit.

Functionally, GTPase that plays an essential role in the late steps of ribosome biogenesis. The protein is GTPase Der of Buchnera aphidicola subsp. Baizongia pistaciae (strain Bp).